The primary structure comprises 248 residues: Triosephosphate isomerase (248 aa).

Asn10 and Lys12 together coordinate substrate. His95 serves as the catalytic Electrophile. The active-site Proton acceptor is Glu165.

The protein belongs to the triosephosphate isomerase family. Homodimer.

It carries out the reaction D-glyceraldehyde 3-phosphate = dihydroxyacetone phosphate. It participates in carbohydrate biosynthesis; gluconeogenesis. The protein operates within carbohydrate degradation; glycolysis; D-glyceraldehyde 3-phosphate from glycerone phosphate: step 1/1. The protein is Triosephosphate isomerase (TPI1) of Debaryomyces hansenii (strain ATCC 36239 / CBS 767 / BCRC 21394 / JCM 1990 / NBRC 0083 / IGC 2968) (Yeast).